Reading from the N-terminus, the 689-residue chain is Glycine--tRNA ligase beta subunit (689 aa).

It belongs to the class-II aminoacyl-tRNA synthetase family. In terms of assembly, tetramer of two alpha and two beta subunits.

It is found in the cytoplasm. The enzyme catalyses tRNA(Gly) + glycine + ATP = glycyl-tRNA(Gly) + AMP + diphosphate. The polypeptide is Glycine--tRNA ligase beta subunit (Photorhabdus laumondii subsp. laumondii (strain DSM 15139 / CIP 105565 / TT01) (Photorhabdus luminescens subsp. laumondii)).